A 119-amino-acid polypeptide reads, in one-letter code: E3 ubiquitin-protein ligase PPP1R11 (119 aa).

Residues 1–42 are disordered; it reads MAESSGPTAGGGATSSTVTTESDTQPEHRSLTLKLRKRKPDK. 2 atypical RING finger domain regions span residues 55-65 and 87-96; these read NLGRRSSKCCC and CESAHCIRGH. The interval 96-119 is disordered; sequence HKKATSGSKETPSSHHDKTGSMQH. Basic and acidic residues predominate over residues 107-119; it reads PSSHHDKTGSMQH.

The enzyme catalyses S-ubiquitinyl-[E2 ubiquitin-conjugating enzyme]-L-cysteine + [acceptor protein]-L-lysine = [E2 ubiquitin-conjugating enzyme]-L-cysteine + N(6)-ubiquitinyl-[acceptor protein]-L-lysine.. The protein operates within protein modification; protein ubiquitination. In terms of biological role, atypical E3 ubiquitin-protein ligase which ubiquitinates TLR2 at 'Lys-754' leading to its degradation by the proteasome. Inhibitor of protein phosphatase 1. The protein is E3 ubiquitin-protein ligase PPP1R11 (ppp1r11) of Xenopus tropicalis (Western clawed frog).